The primary structure comprises 250 residues: MYIFLMYGLEVKQLKLLYNLPKVFLTPNLNKFSITRNYVDCAYYESRSGLTREGCIIFDGNVHRTRGIYYIPVPSAVELSYRRKMIKDEQDVKQIIEKINLYGATLNTNKLLVKWNNYEIILYDRFIKGGMYEFPLLFSQGHLYVYNIPRVREAYRIIYENDNQKEEIDSEMFEEINEFSVYNHAIKFDKKVLKLKELYVSPGQGVVIYTLDDVTLVSESPDHNKIEKFVYKNSWILFSHRAPRNQDQRD.

This is an uncharacterized protein from Sulfolobus islandicus filamentous virus (isolate Iceland/Hveragerdi) (SIFV).